We begin with the raw amino-acid sequence, 466 residues long: Argininosuccinate lyase (466 aa).

The protein belongs to the lyase 1 family. Argininosuccinate lyase subfamily.

The protein localises to the cytoplasm. The catalysed reaction is 2-(N(omega)-L-arginino)succinate = fumarate + L-arginine. It functions in the pathway amino-acid biosynthesis; L-arginine biosynthesis; L-arginine from L-ornithine and carbamoyl phosphate: step 3/3. The sequence is that of Argininosuccinate lyase from Campylobacter concisus (strain 13826).